The following is a 27-amino-acid chain: Conotoxin (27 aa).

Disulfide bonds link cysteine 2/cysteine 16, cysteine 6/cysteine 18, and cysteine 12/cysteine 23. Asparagine 27 is modified (asparagine amide).

Expressed by the venom duct.

Its subcellular location is the secreted. Functionally, probable neurotoxin that inhibits ion channels. In Conus amadis (Amadis cone), this protein is Conotoxin.